Consider the following 873-residue polypeptide: Leucine--tRNA ligase (873 aa).

The short motif at 41–51 (PYPSGRIHMGH) is the 'HIGH' region element. A 'KMSKS' region motif is present at residues 645-649 (KMSKS). Residue lysine 648 participates in ATP binding.

Belongs to the class-I aminoacyl-tRNA synthetase family.

It is found in the cytoplasm. It carries out the reaction tRNA(Leu) + L-leucine + ATP = L-leucyl-tRNA(Leu) + AMP + diphosphate. The sequence is that of Leucine--tRNA ligase from Cereibacter sphaeroides (strain ATCC 17025 / ATH 2.4.3) (Rhodobacter sphaeroides).